Here is a 309-residue protein sequence, read N- to C-terminus: Homoserine kinase (309 aa).

88–98 (PLARGLGSSAA) contacts ATP.

Belongs to the GHMP kinase family. Homoserine kinase subfamily.

The protein localises to the cytoplasm. The catalysed reaction is L-homoserine + ATP = O-phospho-L-homoserine + ADP + H(+). It participates in amino-acid biosynthesis; L-threonine biosynthesis; L-threonine from L-aspartate: step 4/5. Catalyzes the ATP-dependent phosphorylation of L-homoserine to L-homoserine phosphate. This Halalkalibacterium halodurans (strain ATCC BAA-125 / DSM 18197 / FERM 7344 / JCM 9153 / C-125) (Bacillus halodurans) protein is Homoserine kinase.